The primary structure comprises 119 residues: Beta-2-microglobulin (119 aa).

Positions 1-20 (MARFVVVPLLVLVSLFGLEA) are cleaved as a signal peptide. The region spanning 25–114 (PKIQVYSRYP…VTFSTPKTVK (90 aa)) is the Ig-like C1-type domain. The cysteines at positions 45 and 100 are disulfide-linked.

Belongs to the beta-2-microglobulin family. In terms of assembly, heterodimer of an alpha chain and a beta chain. Beta-2-microglobulin is the beta-chain of major histocompatibility complex class I molecules.

The protein resides in the secreted. Its function is as follows. Component of the class I major histocompatibility complex (MHC). Involved in the presentation of peptide antigens to the immune system. The chain is Beta-2-microglobulin (B2M) from Saguinus oedipus (Cotton-top tamarin).